The following is a 305-amino-acid chain: Tyrosine recombinase XerC (305 aa).

The region spanning Thr4–Glu95 is the Core-binding (CB) domain. Residues Leu116–Val298 enclose the Tyr recombinase domain. Catalysis depends on residues Arg159, Lys182, His250, Arg253, and His276. Catalysis depends on Tyr285, which acts as the O-(3'-phospho-DNA)-tyrosine intermediate.

It belongs to the 'phage' integrase family. XerC subfamily. In terms of assembly, forms a cyclic heterotetrameric complex composed of two molecules of XerC and two molecules of XerD.

The protein resides in the cytoplasm. Site-specific tyrosine recombinase, which acts by catalyzing the cutting and rejoining of the recombining DNA molecules. The XerC-XerD complex is essential to convert dimers of the bacterial chromosome into monomers to permit their segregation at cell division. It also contributes to the segregational stability of plasmids. The protein is Tyrosine recombinase XerC of Rickettsia bellii (strain OSU 85-389).